The following is a 523-amino-acid chain: GMP synthase [glutamine-hydrolyzing] (523 aa).

The 198-residue stretch at 8–205 (KILILDFGSQ…VVKICGCERN (198 aa)) folds into the Glutamine amidotransferase type-1 domain. C85 functions as the Nucleophile in the catalytic mechanism. Active-site residues include H179 and E181. The region spanning 206–398 (WTPENIIEDA…LGLPAEMLNR (193 aa)) is the GMPS ATP-PPase domain. 233–239 (SGGVDSS) is a binding site for ATP.

As to quaternary structure, homodimer.

The enzyme catalyses XMP + L-glutamine + ATP + H2O = GMP + L-glutamate + AMP + diphosphate + 2 H(+). The protein operates within purine metabolism; GMP biosynthesis; GMP from XMP (L-Gln route): step 1/1. Catalyzes the synthesis of GMP from XMP. The protein is GMP synthase [glutamine-hydrolyzing] of Pasteurella multocida (strain Pm70).